Consider the following 313-residue polypeptide: Dimethyladenosine transferase (313 aa).

The tract at residues 1 to 22 (MPKIKSAASGRRRERQQQRGQL) is disordered. S-adenosyl-L-methionine contacts are provided by His-37, Leu-39, Gly-64, Glu-85, Asp-113, and Asn-128.

Belongs to the class I-like SAM-binding methyltransferase superfamily. rRNA adenine N(6)-methyltransferase family. As to quaternary structure, part of the small subunit (SSU) processome, composed of more than 70 proteins and the RNA chaperone small nucleolar RNA (snoRNA) U3.

The protein resides in the nucleus. The protein localises to the nucleoplasm. It is found in the nucleolus. It carries out the reaction adenosine(1779)/adenosine(1780) in 18S rRNA + 4 S-adenosyl-L-methionine = N(6)-dimethyladenosine(1779)/N(6)-dimethyladenosine(1780) in 18S rRNA + 4 S-adenosyl-L-homocysteine + 4 H(+). In terms of biological role, specifically dimethylates two adjacent adenosines in the loop of a conserved hairpin near the 3'-end of 18S rRNA in the 40S particle. Involved in the pre-rRNA processing steps leading to small-subunit rRNA production independently of its RNA-modifying catalytic activity. Part of the small subunit (SSU) processome, first precursor of the small eukaryotic ribosomal subunit. During the assembly of the SSU processome in the nucleolus, many ribosome biogenesis factors, an RNA chaperone and ribosomal proteins associate with the nascent pre-rRNA and work in concert to generate RNA folding, modifications, rearrangements and cleavage as well as targeted degradation of pre-ribosomal RNA by the RNA exosome. This Bos taurus (Bovine) protein is Dimethyladenosine transferase (DIMT1).